The following is a 59-amino-acid chain: Small ribosomal subunit protein bS21 (59 aa).

This sequence belongs to the bacterial ribosomal protein bS21 family.

This Acaryochloris marina (strain MBIC 11017) protein is Small ribosomal subunit protein bS21.